The primary structure comprises 266 residues: Glucosamine-6-phosphate deaminase (266 aa).

Residue Asp-72 is the Proton acceptor; for enolization step of the active site. Asp-141 serves as the catalytic For ring-opening step. The active-site Proton acceptor; for ring-opening step is the His-143. Glu-148 serves as the catalytic For ring-opening step.

The protein belongs to the glucosamine/galactosamine-6-phosphate isomerase family. NagB subfamily. As to quaternary structure, homohexamer.

It catalyses the reaction alpha-D-glucosamine 6-phosphate + H2O = beta-D-fructose 6-phosphate + NH4(+). Its pathway is amino-sugar metabolism; N-acetylneuraminate degradation; D-fructose 6-phosphate from N-acetylneuraminate: step 5/5. With respect to regulation, allosterically activated by N-acetylglucosamine 6-phosphate (GlcNAc6P). In terms of biological role, catalyzes the reversible isomerization-deamination of glucosamine 6-phosphate (GlcN6P) to form fructose 6-phosphate (Fru6P) and ammonium ion. This is Glucosamine-6-phosphate deaminase from Aeromonas salmonicida (strain A449).